A 176-amino-acid polypeptide reads, in one-letter code: Pro-glucagon (176 aa).

The N-terminal stretch at 1–20 is a signal peptide; the sequence is MKSLYFVAGLLVMLAQGSWQ. The segment covering 25 to 35 has biased composition (polar residues); that stretch reads NTEEKSSSFPA. The interval 25–59 is disordered; sequence NTEEKSSSFPAPQTDPLGDPDQISEDKRHSQGTFT. At serine 54 the chain carries Phosphoserine. Residues 84-89 constitute a propeptide that is removed on maturation; the sequence is NKNNIA. A phosphoserine mark is found at serine 105 and serine 108. Arginine 127 is modified (arginine amide). Residues 131 to 145 constitute a propeptide that is removed on maturation; it reads DFPEEVNIVEELRRR. Residues serine 150 and serine 152 each carry the phosphoserine modification.

This sequence belongs to the glucagon family. In terms of processing, proglucagon is post-translationally processed in a tissue-specific manner in pancreatic A cells and intestinal L cells. In pancreatic A cells, the major bioactive hormone is glucagon cleaved by PCSK2/PC2. In the intestinal L cells PCSK1/PC1 liberates GLP-1, GLP-2, glicentin and oxyntomodulin. GLP-1 is further N-terminally truncated by post-translational processing in the intestinal L cells resulting in GLP-1(7-37) GLP-1-(7-36)amide. The C-terminal amidation is neither important for the metabolism of GLP-1 nor for its effects on the endocrine pancreas. In terms of tissue distribution, glucagon is secreted in the A cells of the islets of Langerhans. GLP-1, GLP-2, oxyntomodulin and glicentin are secreted from enteroendocrine cells throughout the gastrointestinal tract. GLP-1 and GLP-2 are also secreted in selected neurons in the brain.

It localises to the secreted. Plays a key role in glucose metabolism and homeostasis. Regulates blood glucose by increasing gluconeogenesis and decreasing glycolysis. A counterregulatory hormone of insulin, raises plasma glucose levels in response to insulin-induced hypoglycemia. Plays an important role in initiating and maintaining hyperglycemic conditions in diabetes. Its function is as follows. Potent stimulator of glucose-dependent insulin release. Also stimulates insulin release in response to IL6. Plays important roles on gastric motility and the suppression of plasma glucagon levels. May be involved in the suppression of satiety and stimulation of glucose disposal in peripheral tissues, independent of the actions of insulin. Has growth-promoting activities on intestinal epithelium. May also regulate the hypothalamic pituitary axis (HPA) via effects on LH, TSH, CRH, oxytocin, and vasopressin secretion. Increases islet mass through stimulation of islet neogenesis and pancreatic beta cell proliferation. Inhibits beta cell apoptosis. Functionally, stimulates intestinal growth and up-regulates villus height in the small intestine, concomitant with increased crypt cell proliferation and decreased enterocyte apoptosis. The gastrointestinal tract, from the stomach to the colon is the principal target for GLP-2 action. Plays a key role in nutrient homeostasis, enhancing nutrient assimilation through enhanced gastrointestinal function, as well as increasing nutrient disposal. Stimulates intestinal glucose transport and decreases mucosal permeability. In terms of biological role, significantly reduces food intake. Inhibits gastric emptying in humans. Suppression of gastric emptying may lead to increased gastric distension, which may contribute to satiety by causing a sensation of fullness. May modulate gastric acid secretion and the gastro-pyloro-duodenal activity. May play an important role in intestinal mucosal growth in the early period of life. This chain is Pro-glucagon (GCG), found in Ovis aries (Sheep).